A 375-amino-acid polypeptide reads, in one-letter code: 23S rRNA (uracil(747)-C(5))-methyltransferase RlmC (375 aa).

[4Fe-4S] cluster contacts are provided by cysteine 3, cysteine 11, cysteine 14, and cysteine 87. The S-adenosyl-L-methionine site is built by glutamine 212, phenylalanine 241, glutamate 262, and asparagine 307. Cysteine 334 (nucleophile) is an active-site residue.

This sequence belongs to the class I-like SAM-binding methyltransferase superfamily. RNA M5U methyltransferase family. RlmC subfamily.

It carries out the reaction uridine(747) in 23S rRNA + S-adenosyl-L-methionine = 5-methyluridine(747) in 23S rRNA + S-adenosyl-L-homocysteine + H(+). Functionally, catalyzes the formation of 5-methyl-uridine at position 747 (m5U747) in 23S rRNA. The chain is 23S rRNA (uracil(747)-C(5))-methyltransferase RlmC from Salmonella dublin (strain CT_02021853).